Reading from the N-terminus, the 340-residue chain is Phenylalanine--tRNA ligase alpha subunit (340 aa).

Residue Glu254 coordinates Mg(2+).

The protein belongs to the class-II aminoacyl-tRNA synthetase family. Phe-tRNA synthetase alpha subunit type 1 subfamily. In terms of assembly, tetramer of two alpha and two beta subunits. The cofactor is Mg(2+).

The protein localises to the cytoplasm. The catalysed reaction is tRNA(Phe) + L-phenylalanine + ATP = L-phenylalanyl-tRNA(Phe) + AMP + diphosphate + H(+). The sequence is that of Phenylalanine--tRNA ligase alpha subunit from Acidithiobacillus ferrooxidans (strain ATCC 23270 / DSM 14882 / CIP 104768 / NCIMB 8455) (Ferrobacillus ferrooxidans (strain ATCC 23270)).